The following is a 245-amino-acid chain: Probable ABC transporter permease protein HI_0355 (245 aa).

6 helical membrane passes run 9 to 29 (LLIV…GSFP), 61 to 81 (ICLG…LLSF), 92 to 112 (ILVI…VLWF), 115 to 135 (GMAS…TAAC), 170 to 190 (LPAF…GAVV), and 217 to 237 (FAAL…IDWL). Residues 50 to 234 (LWQHTQVTLL…SISLCLYFSI (185 aa)) form the ABC transmembrane type-1 domain.

Belongs to the binding-protein-dependent transport system permease family. CysTW subfamily.

It localises to the cell inner membrane. Probably part of a binding-protein-dependent transport system. Probably responsible for the translocation of the substrate across the membrane. The chain is Probable ABC transporter permease protein HI_0355 from Haemophilus influenzae (strain ATCC 51907 / DSM 11121 / KW20 / Rd).